The following is a 413-amino-acid chain: MENNTIPKHNTFYAIGLNYKKADAEIRGKFSIDAQSKSNLLQQAKTEGIESLIVTSTCNRTEIYGFAQHPFQLIKLLCENSKGTVEDFQKVAYVYKNQEAISHLFKVGTGLDSQILGDFEIISQIKIAFTESKALDLANSFMERLVNSVIQASKRIKTDTDISSGATSVSFASVQYIMKNVANIGEKNILLFGTGKIGRNTCENLVKHSKNEHITLINRTKDKAEKLAGKLNLIVKDYADLHIELQKADVLVVATGAQNPTIDKAILNLKKPLLILDLSIPKNVNSDVNELENVTLVHLDDLSQITDETLEKRKLHIPAAEAIIEEIKNEFSSWMNGRKYAPTIHALKAKLNTIKEKELIFQRKKLSNFDEEQAELISNRIIQKITNHFANHLKDEETMVDESIDYINKIFQL.

Substrate-binding positions include 57 to 60, Ser-113, 118 to 120, and Gln-124; these read TCNR and DFE. The active-site Nucleophile is Cys-58. 193–198 serves as a coordination point for NADP(+); the sequence is GTGKIG.

This sequence belongs to the glutamyl-tRNA reductase family. In terms of assembly, homodimer.

It carries out the reaction (S)-4-amino-5-oxopentanoate + tRNA(Glu) + NADP(+) = L-glutamyl-tRNA(Glu) + NADPH + H(+). It participates in porphyrin-containing compound metabolism; protoporphyrin-IX biosynthesis; 5-aminolevulinate from L-glutamyl-tRNA(Glu): step 1/2. Its function is as follows. Catalyzes the NADPH-dependent reduction of glutamyl-tRNA(Glu) to glutamate 1-semialdehyde (GSA). The polypeptide is Glutamyl-tRNA reductase (Flavobacterium psychrophilum (strain ATCC 49511 / DSM 21280 / CIP 103535 / JIP02/86)).